Here is a 453-residue protein sequence, read N- to C-terminus: UPF0210 protein Pcar_2119 (453 aa).

The protein belongs to the UPF0210 family. Homodimer.

The polypeptide is UPF0210 protein Pcar_2119 (Syntrophotalea carbinolica (strain DSM 2380 / NBRC 103641 / GraBd1) (Pelobacter carbinolicus)).